An 87-amino-acid chain; its full sequence is Small ribosomal subunit protein bS20 (87 aa).

The disordered stretch occupies residues 1-27; the sequence is MANIKSAKKRAVQSEKRRKHNASRRSM.

It belongs to the bacterial ribosomal protein bS20 family.

Its function is as follows. Binds directly to 16S ribosomal RNA. In Pectobacterium carotovorum subsp. carotovorum (strain PC1), this protein is Small ribosomal subunit protein bS20.